A 233-amino-acid chain; its full sequence is Orotate phosphoribosyltransferase (233 aa).

5-phospho-alpha-D-ribose 1-diphosphate is bound at residue Lys29. Residue 37-38 (FF) coordinates orotate. Residues 79–80 (YK), Arg109, Lys110, Lys113, His115, and 135–143 (DDVITAGTA) contribute to the 5-phospho-alpha-D-ribose 1-diphosphate site. Residues Thr139 and Arg167 each coordinate orotate.

Belongs to the purine/pyrimidine phosphoribosyltransferase family. PyrE subfamily. Homodimer.

It carries out the reaction orotidine 5'-phosphate + diphosphate = orotate + 5-phospho-alpha-D-ribose 1-diphosphate. It participates in pyrimidine metabolism; UMP biosynthesis via de novo pathway; UMP from orotate: step 1/2. In terms of biological role, catalyzes the transfer of a ribosyl phosphate group from 5-phosphoribose 1-diphosphate to orotate, leading to the formation of orotidine monophosphate (OMP). The polypeptide is Orotate phosphoribosyltransferase (ura-5) (Neurospora crassa (strain ATCC 24698 / 74-OR23-1A / CBS 708.71 / DSM 1257 / FGSC 987)).